A 177-amino-acid polypeptide reads, in one-letter code: Large ribosomal subunit protein uL6 (177 aa).

Belongs to the universal ribosomal protein uL6 family. Part of the 50S ribosomal subunit.

In terms of biological role, this protein binds to the 23S rRNA, and is important in its secondary structure. It is located near the subunit interface in the base of the L7/L12 stalk, and near the tRNA binding site of the peptidyltransferase center. The protein is Large ribosomal subunit protein uL6 of Rhizobium rhizogenes (strain K84 / ATCC BAA-868) (Agrobacterium radiobacter).